The chain runs to 649 residues: MRVDVDKYLFIGREKSEFFSACREIGAVEFLSKSKLKDSEKVRKLSEGLKVLNLLTKSCSPADLVSTKSGYLVTEQLLQEIFDLNQEITTLTESLKALGKEIVRVKPLGDFSSEEIRELTLKTGLAVRFLYKRHIEGAPLEVEEENVFYLATAYNYDYYAVIGIVSLSKDIFTEIEAPRSVNELREEEGHLQALLRKKKARVCELYAYREDLLEALCEQCNEQSLQHAEVSAEDLFDDKVFSALGWVIVDRLDEVKKLCDSLGIYLERVQPDPDEVIPTYLENHGLGALGESLVNIYDTPASTDKDPSLWVFFSFFVFFSMIINDAGYGLVFLATSLFLSFKARKQIKRSIALKRFLQMFMILGLGCVCWGGATTSFFGVSVSYTSPFREYSLTHFLALKKAEYYLKERPKGYKELVHDYPILKEKKTPKEFLLAQSTSSGDSVYKAVVYDKFIDNILMEIALLVGVVHLSLGMLRYCRQRYSSIGWVIFMCGAYMYLPIYLQAVSLIHYALHIPYELGGLVGYYVAFIGLGVAILGGVIQRGLRGLDEITAVIQVFSDVLSYLRLYALSLAGAMVGNTVMVMSERFSPAVGILIIIFGHTVNIALSIMGGVIHGLRLNFIEWYHYSFDGGGKLLHPLKKVICQKSQNL.

The next 7 membrane-spanning stretches (helical) occupy residues Phe312 to Phe332, Phe360 to Val380, Phe453 to Gly473, Ile485 to Val505, Gly520 to Ile540, Val556 to Val576, and Ile593 to Ile613.

The protein belongs to the V-ATPase 116 kDa subunit family.

It is found in the cell membrane. In terms of biological role, produces ATP from ADP in the presence of a proton gradient across the membrane. The chain is V-type ATP synthase subunit I (atpI) from Chlamydia trachomatis serovar D (strain ATCC VR-885 / DSM 19411 / UW-3/Cx).